The sequence spans 75 residues: UPF0352 protein VP2129 (75 aa).

It belongs to the UPF0352 family.

The sequence is that of UPF0352 protein VP2129 from Vibrio parahaemolyticus serotype O3:K6 (strain RIMD 2210633).